The following is a 98-amino-acid chain: Cell cycle protein GpsB (98 aa).

The stretch at 34 to 72 (LDMVIKDYEAFHQEIEELQQENLQLKKQLEEANKRQPAQ) forms a coiled coil.

The protein belongs to the GpsB family. As to quaternary structure, forms polymers through the coiled coil domains. Interacts with PBP1, MreC and EzrA.

The protein localises to the cytoplasm. Divisome component that associates with the complex late in its assembly, after the Z-ring is formed, and is dependent on DivIC and PBP2B for its recruitment to the divisome. Together with EzrA, is a key component of the system that regulates PBP1 localization during cell cycle progression. Its main role could be the removal of PBP1 from the cell pole after pole maturation is completed. Also contributes to the recruitment of PBP1 to the division complex. Not essential for septum formation. The sequence is that of Cell cycle protein GpsB from Bacillus licheniformis (strain ATCC 14580 / DSM 13 / JCM 2505 / CCUG 7422 / NBRC 12200 / NCIMB 9375 / NCTC 10341 / NRRL NRS-1264 / Gibson 46).